A 484-amino-acid polypeptide reads, in one-letter code: tRNA sulfurtransferase (484 aa).

In terms of domain architecture, THUMP spans 63–167 (DVFADRLACI…QDKLYMVERR (105 aa)). ATP contacts are provided by residues 185–186 (LI), Lys-267, Gly-289, and Gln-298. A disulfide bridge connects residues Cys-346 and Cys-458. Residues 406–484 (VASGEIIIDV…GYTNVKVYRP (79 aa)) form the Rhodanese domain. Cys-458 (cysteine persulfide intermediate) is an active-site residue.

Belongs to the ThiI family.

The protein localises to the cytoplasm. It carries out the reaction [ThiI sulfur-carrier protein]-S-sulfanyl-L-cysteine + a uridine in tRNA + 2 reduced [2Fe-2S]-[ferredoxin] + ATP + H(+) = [ThiI sulfur-carrier protein]-L-cysteine + a 4-thiouridine in tRNA + 2 oxidized [2Fe-2S]-[ferredoxin] + AMP + diphosphate. The enzyme catalyses [ThiS sulfur-carrier protein]-C-terminal Gly-Gly-AMP + S-sulfanyl-L-cysteinyl-[cysteine desulfurase] + AH2 = [ThiS sulfur-carrier protein]-C-terminal-Gly-aminoethanethioate + L-cysteinyl-[cysteine desulfurase] + A + AMP + 2 H(+). It functions in the pathway cofactor biosynthesis; thiamine diphosphate biosynthesis. Catalyzes the ATP-dependent transfer of a sulfur to tRNA to produce 4-thiouridine in position 8 of tRNAs, which functions as a near-UV photosensor. Also catalyzes the transfer of sulfur to the sulfur carrier protein ThiS, forming ThiS-thiocarboxylate. This is a step in the synthesis of thiazole, in the thiamine biosynthesis pathway. The sulfur is donated as persulfide by IscS. The protein is tRNA sulfurtransferase of Shewanella frigidimarina (strain NCIMB 400).